We begin with the raw amino-acid sequence, 307 residues long: MAKISVIGAGNVGATTVQRLAELEPGEIVMTDIVEGLPQGKALDLMQAGAINGYDTQVTGTNDYADITDSDLVIITAGIARKPGMTREDLMKTNSKIIGEVSRNIAEYAPNSIVINVTNPLDVITYVAMKTTGFETKKVFGMSGVLDAGRFASFIAEELNCSKKDIEAMVIGGHGDLMVPLPQYTTVSGIPLPELLPEETIARLVERTVNGGAEIVGLLKQGSAFYAPSAAIVSVAEAVLKDSKRILPTSAYLEGQYGQEGIYFGVLAKLGANGVEEVLELKLEENQYEILRKSSETIKRGISKLGI.

Residues 8–13 (GAGNVG) and Asp32 each bind NAD(+). Substrate contacts are provided by Arg81 and Arg87. NAD(+) is bound by residues Asn94 and 117 to 119 (VTN). Residues Asn119 and Arg150 each contribute to the substrate site. Catalysis depends on His174, which acts as the Proton acceptor.

Belongs to the LDH/MDH superfamily.

It carries out the reaction (S)-malate + NAD(+) = oxaloacetate + NADH + H(+). In terms of biological role, catalyzes the reversible oxidation of malate to oxaloacetate. This is Malate dehydrogenase (mdh) from Methanosarcina acetivorans (strain ATCC 35395 / DSM 2834 / JCM 12185 / C2A).